The primary structure comprises 37 residues: Large ribosomal subunit protein bL36 (37 aa).

The protein belongs to the bacterial ribosomal protein bL36 family.

The polypeptide is Large ribosomal subunit protein bL36 (Mycobacteroides abscessus (strain ATCC 19977 / DSM 44196 / CCUG 20993 / CIP 104536 / JCM 13569 / NCTC 13031 / TMC 1543 / L948) (Mycobacterium abscessus)).